The sequence spans 486 residues: Ribulose bisphosphate carboxylase large chain (486 aa).

Substrate contacts are provided by N125 and T175. K177 serves as the catalytic Proton acceptor. K179 provides a ligand contact to substrate. K203, D205, and E206 together coordinate Mg(2+). K203 bears the N6-carboxylysine mark. The Proton acceptor role is filled by H295. R296, H328, and S380 together coordinate substrate.

Belongs to the RuBisCO large chain family. Type I subfamily. As to quaternary structure, heterohexadecamer of 8 large chains and 8 small chains. Requires Mg(2+) as cofactor.

It catalyses the reaction 2 (2R)-3-phosphoglycerate + 2 H(+) = D-ribulose 1,5-bisphosphate + CO2 + H2O. It carries out the reaction D-ribulose 1,5-bisphosphate + O2 = 2-phosphoglycolate + (2R)-3-phosphoglycerate + 2 H(+). RuBisCO catalyzes two reactions: the carboxylation of D-ribulose 1,5-bisphosphate, the primary event in carbon dioxide fixation, as well as the oxidative fragmentation of the pentose substrate. Both reactions occur simultaneously and in competition at the same active site. The polypeptide is Ribulose bisphosphate carboxylase large chain (Cereibacter sphaeroides (Rhodobacter sphaeroides)).